The following is a 1507-amino-acid chain: DDB1- and CUL4-associated factor 1 (1507 aa).

The interval 141-500 (QPLRTYSTGL…STLEILNLED (360 aa)) is protein kinase-like. Serine 202 and serine 255 each carry phosphoserine. The disordered stretch occupies residues 242-288 (HLDSGHKTSSRVNSTTKPEDGGLKKNKSAKQGDRENFRKAKQKLGFS). Residues 562–593 (SYTHEQIVEMMEFLIEYGPAQLYWEPAEVFLK) form the Chromo domain. At lysine 701 the chain carries N6-acetyllysine. Residue serine 828 is modified to Phosphoserine. The LisH domain maps to 846-878 (PEKELLLLIRNHLISKGLGETATVLTKEADLPM). A Phosphothreonine modification is found at threonine 888. Residues serine 895 and serine 898 each carry the phosphoserine modification. Residues 917 to 947 (AAVGASAPSAPTAHPQPRPPQGPLALPGPSY) are disordered. 2 positions are modified to phosphoserine: serine 979 and serine 1000. WD repeat units follow at residues 1091-1130 (EDES…EEAS), 1133-1174 (CHNS…DMKH), 1176-1213 (FTED…KLLT), 1215-1247 (FNPD…WDVR), and 1248-1290 (SAQA…LLHT). The tract at residues 1091–1290 (EDESGFTCCA…DLRTFHLLHT (200 aa)) is WD repeat-like region. 2 consecutive short sequence motifs (DWD box) follow at residues 1242–1249 (VLWDVRSA) and 1278–1285 (EIWDLRTF). Serine 1328 is modified (phosphoserine). Positions 1393-1507 (RLAEDEDEEE…EDDIILSLNE (115 aa)) are disordered. Acidic residues-rich tracts occupy residues 1396 to 1483 (EDED…EEVE) and 1490 to 1501 (DSSDNSDLEDDI). The segment at 1418–1507 (DDDTDDLDEL…EDDIILSLNE (90 aa)) is interaction with NF2.

This sequence belongs to the VPRBP/DCAF1 family. Component of the DCX (DDB1-CUL4-X-box) E3 ubiquitin-protein ligase complex, named CUL4A-RBX1-DDB1-DCAF1/VPRBP complex. Interacts with DDB1; the interaction is direct. Also forms a ternary complex with DDA1 and DDB1. Interacts with NF2 (via FERM domain). Component of the EDVP complex, a E3 ligase complex containing DYRK2, EDD/UBR5, DDB1 and DCAF1. Interacts with DYRK2; the interaction is direct. Interacts with RAG1; the interaction is direct. Interacts with LLGL1 and LLGL2. Interacts with histone H3. Interacts with ESR1 and LATS1; probably recruited by LATS1 to promote ESR1 ubiquitination and ubiquitin-mediated proteasomal degradation. Directly interacts with TET1, TET2 and TET3 (via C-terminus). Interacts with CEP78; promoting DCAF1 localization to centrosomes. As to quaternary structure, (Microbial infection) Interacts with HIV-1 virus Vpr protein; the interaction is direct. In terms of assembly, (Microbial infection) Interacts with HIV-2 virus Vpx protein; the interaction is direct and the complex recruits SAMHD1 to promote its ubiquitin-dependent proteasomal degradation. (Microbial infection) Interacts (via C-terminus) with human cytomegalovirus protein UL35; this interaction induces the accumulation of cells in the G2 phase of the cell cycle. Ubiquitously expressed.

It is found in the cytoplasm. The protein resides in the nucleus. The protein localises to the cytoskeleton. It localises to the microtubule organizing center. Its subcellular location is the centrosome. It catalyses the reaction L-seryl-[protein] + ATP = O-phospho-L-seryl-[protein] + ADP + H(+). It carries out the reaction L-threonyl-[protein] + ATP = O-phospho-L-threonyl-[protein] + ADP + H(+). It participates in protein modification; protein ubiquitination. In terms of biological role, acts both as a substrate recognition component of E3 ubiquitin-protein ligase complexes and as an atypical serine/threonine-protein kinase, playing key roles in various processes such as cell cycle, telomerase regulation and histone modification. Probable substrate-specific adapter of a DCX (DDB1-CUL4-X-box) E3 ubiquitin-protein ligase complex, named CUL4A-RBX1-DDB1-DCAF1/VPRBP complex, which mediates ubiquitination and proteasome-dependent degradation of proteins such as NF2. Involved in the turnover of methylated proteins: recognizes and binds methylated proteins via its chromo domain, leading to ubiquitination of target proteins by the RBX1-DDB1-DCAF1/VPRBP complex. The CUL4A-RBX1-DDB1-DCAF1/VPRBP complex is also involved in B-cell development: DCAF1 is recruited by RAG1 to ubiquitinate proteins, leading to limit error-prone repair during V(D)J recombination. Also part of the EDVP complex, an E3 ligase complex that mediates ubiquitination of proteins such as TERT, leading to TERT degradation and telomerase inhibition. The EDVP complex also mediates ubiquitination and degradation of CCP110. Also acts as an atypical serine/threonine-protein kinase that specifically mediates phosphorylation of 'Thr-120' of histone H2A (H2AT120ph) in a nucleosomal context, thereby repressing transcription. H2AT120ph is present in the regulatory region of many tumor suppresor genes, down-regulates their transcription and is present at high level in a number of tumors. Involved in JNK-mediated apoptosis during cell competition process via its interaction with LLGL1 and LLGL2. By acting on TET dioxygenses, essential for oocyte maintenance at the primordial follicle stage, hence essential for female fertility. Functionally, (Microbial infection) In case of infection by HIV-1 virus, it is recruited by HIV-1 Vpr in order to hijack the CUL4A-RBX1-DDB1-DCAF1/VPRBP function leading to arrest the cell cycle in G2 phase, and also to protect the viral protein from proteasomal degradation by another E3 ubiquitin ligase. The HIV-1 Vpr protein hijacks the CUL4A-RBX1-DDB1-DCAF1/VPRBP complex to promote ubiquitination and degradation of proteins such as TERT and ZIP/ZGPAT. Its function is as follows. (Microbial infection) In case of infection by HIV-2 virus, it is recruited by HIV-2 Vpx in order to hijack the CUL4A-RBX1-DDB1-DCAF1/VPRBP function leading to enhanced efficiency of macrophage infection and promotion of the replication of cognate primate lentiviruses in cells of monocyte/macrophage lineage. The sequence is that of DDB1- and CUL4-associated factor 1 from Homo sapiens (Human).